The primary structure comprises 393 residues: NAD(P)H-quinone oxidoreductase subunit H, chloroplastic (393 aa).

It belongs to the complex I 49 kDa subunit family. NDH is composed of at least 16 different subunits, 5 of which are encoded in the nucleus.

The protein resides in the plastid. It is found in the chloroplast thylakoid membrane. It catalyses the reaction a plastoquinone + NADH + (n+1) H(+)(in) = a plastoquinol + NAD(+) + n H(+)(out). It carries out the reaction a plastoquinone + NADPH + (n+1) H(+)(in) = a plastoquinol + NADP(+) + n H(+)(out). Its function is as follows. NDH shuttles electrons from NAD(P)H:plastoquinone, via FMN and iron-sulfur (Fe-S) centers, to quinones in the photosynthetic chain and possibly in a chloroplast respiratory chain. The immediate electron acceptor for the enzyme in this species is believed to be plastoquinone. Couples the redox reaction to proton translocation, and thus conserves the redox energy in a proton gradient. The polypeptide is NAD(P)H-quinone oxidoreductase subunit H, chloroplastic (Lobularia maritima (Sweet alyssum)).